The primary structure comprises 176 residues: Cathelicidin-2 (176 aa).

The first 29 residues, 1–29 (METQGASLSLGRWSLWLLLLGLVLPSASA), serve as a signal peptide directing secretion. Pyrrolidone carboxylic acid is present on Gln-30. A propeptide spanning residues 30 to 130 (QALSYREAVL…DINCNELQSV (101 aa)) is cleaved from the precursor. 2 disulfide bridges follow: Cys-85–Cys-96 and Cys-107–Cys-124. Positions 135-176 (PIRRPPIRPPFRPPFRPPVRPPIRPPFRPPFRPPIGPFPGRR) are disordered. Pro residues predominate over residues 141 to 176 (IRPPFRPPFRPPVRPPIRPPFRPPFRPPIGPFPGRR). Proline amide is present on Pro-173. Positions 174-176 (GRR) are cleaved as a propeptide — removed in mature form.

The protein belongs to the cathelicidin family. Post-translationally, elastase is responsible for its maturation.

It localises to the secreted. In terms of biological role, binds to the lipid A moiety of bacterial lipipolysaccharides (LPS), a glycolipid present in the outer membrane of all Gram-negative bacteria. Potent antimicrobial activity. The sequence is that of Cathelicidin-2 (CATHL2) from Ovis aries (Sheep).